The following is an 831-amino-acid chain: V-type proton ATPase 116 kDa subunit a1 (831 aa).

At 1 to 388 (MGELFRSEEM…DAYGIGSYRE (388 aa)) the chain is on the cytoplasmic side. The helical transmembrane segment at 389–407 (INPAPYTIITFPFLFAVMF) threads the bilayer. Topologically, residues 408-409 (GD) are vacuolar. A helical membrane pass occupies residues 410–426 (FGHGILMTLFAVWMVVR). At 427–441 (ESRILSQKIDNELFS) the chain is on the cytoplasmic side. Residues 442–471 (MMFSGRYIILLMGLFSTYTGLIYNDCFSKA) form a helical membrane-spanning segment. Residues 472-534 (LNLFGSSWSV…ATNKLTFLNS (63 aa)) lie on the Vacuolar side of the membrane. A helical membrane pass occupies residues 535–554 (FKMKMSVILGIIHMIFGVAL). The Cytoplasmic segment spans residues 555–572 (SVLNHIYFKKPLNIYLSF). A helical transmembrane segment spans residues 573-593 (IPEMIFMTTLFGYLVILIIYK). At 594–638 (WCAYDVSTSMVAPSLLIHFINMFLFSYQDTSLPMLYKGQMGLQCF) the chain is on the vacuolar side. A helical transmembrane segment spans residues 639–658 (LVVCAIICVPWMLVLKPLIL). Residues 659-718 (RRQYLRRKHLGTHNFGGIRVGNGPTEEDAEIIQHDQLSMHSDEEEEFDFGDTVVHQAIHT) lie on the Cytoplasmic side of the membrane. A helical transmembrane segment spans residues 719–743 (IEYCLGCISNTASYLRLWALSLAHA). Over 744–764 (QLSEVLWTMVMHIGLNIRSLG) the chain is Vacuolar. A helical transmembrane segment spans residues 765–803 (GGIALVFIFSAFATLTIAILLIMEGLSAFLHALRLHWVE). The Cytoplasmic portion of the chain corresponds to 804–831 (FRNKFYMGTGFKFLPFSFETIWEGKFDD).

The protein belongs to the V-ATPase 116 kDa subunit family. As to quaternary structure, V-ATPase is a heteromultimeric enzyme made up of two complexes: the ATP-hydrolytic V1 complex and the proton translocation V0 complex. The V1 complex consists of three catalytic AB heterodimers that form a heterohexamer, three peripheral stalks each consisting of EG heterodimers, one central rotor including subunits D and F, and the regulatory subunits C and H. The proton translocation complex V0 consists of the proton transport subunit a, a ring of proteolipid subunits c9c'', rotary subunit d, subunits e and f, and two accessory subunits.

The protein resides in the cytoplasmic vesicle. It is found in the clathrin-coated vesicle membrane. Its subcellular location is the secretory vesicle. The protein localises to the synaptic vesicle membrane. It localises to the melanosome. Functionally, subunit of the V0 complex of vacuolar(H+)-ATPase (V-ATPase), a multisubunit enzyme composed of a peripheral complex (V1) that hydrolyzes ATP and a membrane integral complex (V0) that translocates protons. V-ATPase is responsible for acidifying and maintaining the pH of intracellular compartments and in some cell types, is targeted to the plasma membrane, where it is responsible for acidifying the extracellular environment. Required for assembly and activity of the vacuolar ATPase. The polypeptide is V-type proton ATPase 116 kDa subunit a1 (atp6v0a1) (Xenopus laevis (African clawed frog)).